The chain runs to 434 residues: Zinc finger CCCH domain-containing protein 10 (434 aa).

Residues 1 to 37 are disordered; that stretch reads MPDRDSYANGTGSSGGGPGGGGSEEASGAGVGSGGAS. Gly residues predominate over residues 12–35; that stretch reads GSSGGGPGGGGSEEASGAGVGSGG. 3 consecutive C3H1-type zinc fingers follow at residues 36–63, 73–99, and 134–161; these read ASSDAICRDFLRNVCKRGKRCRYRHPDM, KNEFIFCHDFQNKECSRPNCRFIHGSK, and KEEVPICRDFLKGDCQRGAKCKFRHLQR. Residues R185 and R186 each carry the omega-N-methylarginine modification. A compositionally biased stretch (basic and acidic residues) spans 196–207; it reads PDRGFEDHEPGP. The disordered stretch occupies residues 196–217; it reads PDRGFEDHEPGPKRRRGGCCPP. The stretch at 234–280 forms a coiled coil; sequence GVECRLLEEENAMLRKRVEELKKQVSNLLATNEVLLEQNAQFRNQAK. Positions 314–330 are enriched in polar residues; sequence TTLSSQALQPRPVSQQE. A disordered region spans residues 314-362; it reads TTLSSQALQPRPVSQQELVAPAGAPAAPPTNAAPPAAPPPPPPHLTPEI. The segment covering 339–358 has biased composition (pro residues); sequence AAPPTNAAPPAAPPPPPPHL.

The protein resides in the nucleus. Its function is as follows. Specific regulator of miRNA biogenesis. Binds, via the C3H1-type zinc finger domains, to the binding motif 5'-GCAGCGC-3' on microRNA pri-MIR143 and negatively regulates the processing to mature microRNA. This Homo sapiens (Human) protein is Zinc finger CCCH domain-containing protein 10 (ZC3H10).